The primary structure comprises 265 residues: 3-methyl-2-oxobutanoate hydroxymethyltransferase (265 aa).

Positions 46 and 85 each coordinate Mg(2+). 3-methyl-2-oxobutanoate-binding positions include 46-47, Asp85, and Lys114; that span reads DS. Glu116 contributes to the Mg(2+) binding site. The Proton acceptor role is filled by Glu183.

This sequence belongs to the PanB family. Homodecamer; pentamer of dimers. Mg(2+) is required as a cofactor.

It localises to the cytoplasm. It carries out the reaction 3-methyl-2-oxobutanoate + (6R)-5,10-methylene-5,6,7,8-tetrahydrofolate + H2O = 2-dehydropantoate + (6S)-5,6,7,8-tetrahydrofolate. Its pathway is cofactor biosynthesis; coenzyme A biosynthesis. Functionally, catalyzes the reversible reaction in which hydroxymethyl group from 5,10-methylenetetrahydrofolate is transferred onto alpha-ketoisovalerate to form ketopantoate. The sequence is that of 3-methyl-2-oxobutanoate hydroxymethyltransferase from Caldivirga maquilingensis (strain ATCC 700844 / DSM 13496 / JCM 10307 / IC-167).